The primary structure comprises 189 residues: Endoribonuclease YbeY (189 aa).

Positions 1–10 (MKERSSSPGT) are enriched in polar residues. Residues 1–23 (MKERSSSPGTPDSGRRARPKPAK) form a disordered region. Zn(2+) contacts are provided by His141, His145, and His151.

It belongs to the endoribonuclease YbeY family. The cofactor is Zn(2+).

Its subcellular location is the cytoplasm. Single strand-specific metallo-endoribonuclease involved in late-stage 70S ribosome quality control and in maturation of the 3' terminus of the 16S rRNA. In Nitrosospira multiformis (strain ATCC 25196 / NCIMB 11849 / C 71), this protein is Endoribonuclease YbeY.